A 388-amino-acid chain; its full sequence is Succinate--CoA ligase [ADP-forming] subunit beta (388 aa).

Residues 9–244 form the ATP-grasp domain; that stretch reads KQLFAEFGLP…PSQEDEREAH (236 aa). ATP is bound by residues Lys-46, 53–55, Glu-99, Ser-102, and Glu-107; that span reads GRG. Mg(2+)-binding residues include Asn-199 and Asp-213. Substrate-binding positions include Asn-264 and 321–323; that span reads GIV.

It belongs to the succinate/malate CoA ligase beta subunit family. In terms of assembly, heterotetramer of two alpha and two beta subunits. Mg(2+) is required as a cofactor.

The enzyme catalyses succinate + ATP + CoA = succinyl-CoA + ADP + phosphate. It catalyses the reaction GTP + succinate + CoA = succinyl-CoA + GDP + phosphate. It functions in the pathway carbohydrate metabolism; tricarboxylic acid cycle; succinate from succinyl-CoA (ligase route): step 1/1. Succinyl-CoA synthetase functions in the citric acid cycle (TCA), coupling the hydrolysis of succinyl-CoA to the synthesis of either ATP or GTP and thus represents the only step of substrate-level phosphorylation in the TCA. The beta subunit provides nucleotide specificity of the enzyme and binds the substrate succinate, while the binding sites for coenzyme A and phosphate are found in the alpha subunit. The protein is Succinate--CoA ligase [ADP-forming] subunit beta of Aliivibrio fischeri (strain ATCC 700601 / ES114) (Vibrio fischeri).